A 185-amino-acid polypeptide reads, in one-letter code: Ribosome-recycling factor (185 aa).

The protein belongs to the RRF family.

It is found in the cytoplasm. In terms of biological role, responsible for the release of ribosomes from messenger RNA at the termination of protein biosynthesis. May increase the efficiency of translation by recycling ribosomes from one round of translation to another. This Pseudomonas entomophila (strain L48) protein is Ribosome-recycling factor.